The following is a 223-amino-acid chain: Putative oxidoreductase MT1904 (223 aa).

An NADP(+)-binding site is contributed by 4 to 28; the sequence is LVTGGDTDLGRTMAEGFRNDGHKVT. S128 lines the substrate pocket.

The protein belongs to the short-chain dehydrogenases/reductases (SDR) family.

This Mycobacterium tuberculosis (strain CDC 1551 / Oshkosh) protein is Putative oxidoreductase MT1904.